The primary structure comprises 508 residues: Early growth response protein 1 (508 aa).

Disordered stretches follow at residues P18 to S78 and M136 to P210. Low complexity predominate over residues N33–S42. The segment covering S43 to N52 has biased composition (gly residues). Positions P139–S164 are enriched in low complexity. K278 is covalently cross-linked (Glycyl lysine isopeptide (Lys-Gly) (interchain with G-Cter in SUMO2)). The disordered stretch occupies residues S292–Y311. C2H2-type zinc fingers lie at residues Y311 to H335, F341 to H363, and F369 to H391. Residues D382–S453 form a disordered region. The span at R386–D396 shows a compositional bias: basic residues. Positions S402 to P450 are enriched in low complexity. Repeat copies occupy residues S413–A420, T421–T428, T429–P436, T437–S444, S445–H452, S453–V460, and T462–P468. Residues S413–P468 are 7 X 8 AA tandem repeats of [TS](2)-[FY]-[PS]-S-P-[GSAV]-X.

This sequence belongs to the EGR C2H2-type zinc-finger protein family. As to quaternary structure, interacts with SNAI1 and SP1 upon 12-O-tetradecanoylphorbol-13-acetate (TPA) induction. In terms of tissue distribution, detected in kidney thick ascending limbs and collecting ducts (at protein level).

The protein localises to the nucleus. Its subcellular location is the cytoplasm. In terms of biological role, transcriptional regulator. Recognizes and binds to the DNA sequence 5'-GCG(T/G)GGGCG-3'(EGR-site) in the promoter region of target genes. Binds double-stranded target DNA, irrespective of the cytosine methylation status. Regulates the transcription of numerous target genes, and thereby plays an important role in regulating the response to growth factors, DNA damage, and ischemia. Plays a role in the regulation of cell survival, proliferation and cell death. Activates expression of p53/TP53 and TGFB1, and thereby helps prevent tumor formation. Required for normal progress through mitosis and normal proliferation of hepatocytes after partial hepatectomy. Mediates responses to ischemia and hypoxia; regulates the expression of proteins such as IL1B and CXCL2 that are involved in inflammatory processes and development of tissue damage after ischemia. Regulates biosynthesis of luteinizing hormone (LHB) in the pituitary. Regulates the amplitude of the expression rhythms of clock genes: BMAL1, PER2 and NR1D1 in the liver via the activation of PER1 (clock repressor) transcription. Regulates the rhythmic expression of core-clock gene BMAL1 in the suprachiasmatic nucleus (SCN). Regulates biosynthesis of glucocorticoid receptor GR/NR3C1 in the hippocampus and thereby may play a role in the behavioral and hypothalamic-pituitary-adrenal responses to stress in offspring. The polypeptide is Early growth response protein 1 (Egr1) (Rattus norvegicus (Rat)).